We begin with the raw amino-acid sequence, 333 residues long: Aquaporin-1 (333 aa).

The disordered stretch occupies residues 1–26 (MQKMSEKPLYRAAENPTRNADRRAGR). Transmembrane regions (helical) follow at residues 85–105 (LAMF…HFTG) and 116–136 (FHGF…GGII). Residues 137 to 139 (NPA) carry the NPA 1 motif. Transmembrane regions (helical) follow at residues 156-176 (LVLV…VYLI), 213-233 (TGAI…FLSI), and 245-265 (LFPF…SYSA). The NPA 2 motif lies at 270–272 (NPA). The chain crosses the membrane as a helical span at residues 303–323 (WLFPYVGALFGAVMYQIFVGV).

This sequence belongs to the MIP/aquaporin (TC 1.A.8) family.

The protein localises to the cell membrane. In terms of biological role, aquaglyceroporin that may modulate the water content and osmolytes during anhydrobiosis. The chain is Aquaporin-1 from Milnesium tardigradum (Water bear).